Reading from the N-terminus, the 195-residue chain is Protein GrpE (195 aa).

Residues 1–14 (MQEPHDQEPIEKQK) are compositionally biased toward basic and acidic residues. The tract at residues 1–45 (MQEPHDQEPIEKQKLPGMDDVLETEHSGTVAGNTERAGEDAAPSL) is disordered.

It belongs to the GrpE family. In terms of assembly, homodimer.

Its subcellular location is the cytoplasm. Functionally, participates actively in the response to hyperosmotic and heat shock by preventing the aggregation of stress-denatured proteins, in association with DnaK and GrpE. It is the nucleotide exchange factor for DnaK and may function as a thermosensor. Unfolded proteins bind initially to DnaJ; upon interaction with the DnaJ-bound protein, DnaK hydrolyzes its bound ATP, resulting in the formation of a stable complex. GrpE releases ADP from DnaK; ATP binding to DnaK triggers the release of the substrate protein, thus completing the reaction cycle. Several rounds of ATP-dependent interactions between DnaJ, DnaK and GrpE are required for fully efficient folding. The polypeptide is Protein GrpE (Nitrosomonas europaea (strain ATCC 19718 / CIP 103999 / KCTC 2705 / NBRC 14298)).